Consider the following 340-residue polypeptide: Lipoyl synthase (340 aa).

Residues Cys83, Cys88, Cys94, Cys109, Cys113, Cys116, and Ser323 each contribute to the [4Fe-4S] cluster site. Residues 95-312 (FSGGTATFMI…AEEGYKMGFK (218 aa)) form the Radical SAM core domain.

It belongs to the radical SAM superfamily. Lipoyl synthase family. [4Fe-4S] cluster serves as cofactor.

The protein localises to the cytoplasm. The enzyme catalyses [[Fe-S] cluster scaffold protein carrying a second [4Fe-4S](2+) cluster] + N(6)-octanoyl-L-lysyl-[protein] + 2 oxidized [2Fe-2S]-[ferredoxin] + 2 S-adenosyl-L-methionine + 4 H(+) = [[Fe-S] cluster scaffold protein] + N(6)-[(R)-dihydrolipoyl]-L-lysyl-[protein] + 4 Fe(3+) + 2 hydrogen sulfide + 2 5'-deoxyadenosine + 2 L-methionine + 2 reduced [2Fe-2S]-[ferredoxin]. The protein operates within protein modification; protein lipoylation via endogenous pathway; protein N(6)-(lipoyl)lysine from octanoyl-[acyl-carrier-protein]: step 2/2. In terms of biological role, catalyzes the radical-mediated insertion of two sulfur atoms into the C-6 and C-8 positions of the octanoyl moiety bound to the lipoyl domains of lipoate-dependent enzymes, thereby converting the octanoylated domains into lipoylated derivatives. This is Lipoyl synthase from Pseudomonas fluorescens (strain Pf0-1).